The sequence spans 545 residues: Ribulokinase (545 aa).

It belongs to the ribulokinase family.

It catalyses the reaction D-ribulose + ATP = D-ribulose 5-phosphate + ADP + H(+). The enzyme catalyses L-ribulose + ATP = L-ribulose 5-phosphate + ADP + H(+). It participates in carbohydrate degradation; L-arabinose degradation via L-ribulose; D-xylulose 5-phosphate from L-arabinose (bacterial route): step 2/3. This is Ribulokinase from Staphylococcus aureus (strain MSSA476).